A 155-amino-acid chain; its full sequence is SsrA-binding protein (155 aa).

Positions 123–142 (DLHDKRETEKKRDWEREKGQ) are enriched in basic and acidic residues. A disordered region spans residues 123-155 (DLHDKRETEKKRDWEREKGQLMRHKISSPRKDT). Residues 143-155 (LMRHKISSPRKDT) are compositionally biased toward basic residues.

This sequence belongs to the SmpB family.

It localises to the cytoplasm. Required for rescue of stalled ribosomes mediated by trans-translation. Binds to transfer-messenger RNA (tmRNA), required for stable association of tmRNA with ribosomes. tmRNA and SmpB together mimic tRNA shape, replacing the anticodon stem-loop with SmpB. tmRNA is encoded by the ssrA gene; the 2 termini fold to resemble tRNA(Ala) and it encodes a 'tag peptide', a short internal open reading frame. During trans-translation Ala-aminoacylated tmRNA acts like a tRNA, entering the A-site of stalled ribosomes, displacing the stalled mRNA. The ribosome then switches to translate the ORF on the tmRNA; the nascent peptide is terminated with the 'tag peptide' encoded by the tmRNA and targeted for degradation. The ribosome is freed to recommence translation, which seems to be the essential function of trans-translation. The polypeptide is SsrA-binding protein (Methylibium petroleiphilum (strain ATCC BAA-1232 / LMG 22953 / PM1)).